The chain runs to 64 residues: H/ACA ribonucleoprotein complex subunit 3-like protein (64 aa).

It belongs to the NOP10 family. Component of the small nucleolar ribonucleoprotein particles containing H/ACA-type snoRNAs (H/ACA snoRNPs).

The protein localises to the nucleus. Its subcellular location is the nucleolus. Its function is as follows. Required for ribosome biogenesis. Part of a complex which catalyzes pseudouridylation of rRNA. This involves the isomerization of uridine such that the ribose is subsequently attached to C5, instead of the normal N1. Pseudouridine ('psi') residues may serve to stabilize the conformation of rRNAs. This chain is H/ACA ribonucleoprotein complex subunit 3-like protein, found in Arabidopsis thaliana (Mouse-ear cress).